Consider the following 319-residue polypeptide: Zinc finger protein C19B12.07c (319 aa).

A C2H2-type zinc finger spans residues 146 to 170 (FRCLCCHVPCKNKKLLREHMNNKRH).

The protein belongs to the ZNF277 family.

The protein localises to the nucleus. In Schizosaccharomyces pombe (strain 972 / ATCC 24843) (Fission yeast), this protein is Zinc finger protein C19B12.07c.